Reading from the N-terminus, the 184-residue chain is Large ribosomal subunit protein uL6 (184 aa).

It belongs to the universal ribosomal protein uL6 family. As to quaternary structure, part of the 50S ribosomal subunit.

In terms of biological role, this protein binds to the 23S rRNA, and is important in its secondary structure. It is located near the subunit interface in the base of the L7/L12 stalk, and near the tRNA binding site of the peptidyltransferase center. The polypeptide is Large ribosomal subunit protein uL6 (Thermococcus onnurineus (strain NA1)).